We begin with the raw amino-acid sequence, 118 residues long: Putative pterin-4-alpha-carbinolamine dehydratase (118 aa).

The protein belongs to the pterin-4-alpha-carbinolamine dehydratase family.

The enzyme catalyses (4aS,6R)-4a-hydroxy-L-erythro-5,6,7,8-tetrahydrobiopterin = (6R)-L-erythro-6,7-dihydrobiopterin + H2O. This is Putative pterin-4-alpha-carbinolamine dehydratase from Pseudomonas savastanoi pv. phaseolicola (strain 1448A / Race 6) (Pseudomonas syringae pv. phaseolicola (strain 1448A / Race 6)).